The following is a 473-amino-acid chain: MNNSKQFLKYQPLLEWLAKHEAYISPKLYIASSGVAGDGIFSTFDIDELEVLAKIPRRIILSPRNSRFGDSLYTHFNESNRSDDINFDNRDQVGLVMLVITVILENITDSPWNAYLNTLDETCMPDSPLLWKDKTCLEGTSMLDVINTNLRVYKNQYDQLVRPYFYKHADLKQLCPKWNQYLETCVLVQSRCFYVNSYYGLSLIPFFDIFNHKSGPAIASLHCQESNDHKGDIKIEFISFQYIRKMSEIFNSFGNFAADELFTQYGFIDTACKVWRVDMTMIAYETNRNFYMEWIHKKRIINTQELLVTPTTYANDKSETLRSVMIRQPMDLYIITDHGPSYGLYLYLFFCIYKIKFQKCDMNIVMLTKYFNEIWAVFIAHKEGEKEKVVAQLSGFSFYCKAIEFLQMLCQKRISRFKNGGLTAEAYKTLLCDPTLKRENRSRLVLQIFYHELNLLEKSMQETIYLCTENFED.

An SET domain is found at 26-254 (PKLYIASSGV…KMSEIFNSFG (229 aa)).

This is an uncharacterized protein from Schizosaccharomyces pombe (strain 972 / ATCC 24843) (Fission yeast).